The sequence spans 205 residues: Large ribosomal subunit protein uL3c (205 aa).

A disordered region spans residues 130–150 (RGPMSHGSKNHRQPGSIGAGT).

Belongs to the universal ribosomal protein uL3 family. Part of the 50S ribosomal subunit.

The protein localises to the plastid. The protein resides in the chloroplast. Its function is as follows. One of the primary rRNA binding proteins, it binds directly near the 3'-end of the 23S rRNA, where it nucleates assembly of the 50S subunit. This chain is Large ribosomal subunit protein uL3c (rpl3), found in Gracilaria tenuistipitata var. liui (Red alga).